Here is a 377-residue protein sequence, read N- to C-terminus: MLKRASFVEVNTHSLRHNFNAVKNIVPKDACVMAVVKANAYGAGAIKASEIFLQEGANYLGVATLDEALELRSHFSQTPILILGYSPNTNASMLIDNDLSAMVFSLEQAEVFSQMALKSQKRLKVHLKIDTGMHRLGLEPTFKSIETIKKIRALKGLEVEGIFTHLSNADSNIKTHAKNQMKVFNAFLEQLLDQKIEFQYRHAYNSAGILSLCNGNENRLLNLYRPGIMLYGFYPSNEMKESSQTILKNVISLKARIVQIKRVKKGEFIGYGEHFYTNEETLVGVLALGYADGLVRALGNRIQVAINNQLAPLIGKVCMDQCFVKLNDIEAKEGDEVILFGDKSTKANDASEIATLLNTIPYETISTLSKRLERVYV.

Lysine 37 serves as the catalytic Proton acceptor; specific for D-alanine. Position 37 is an N6-(pyridoxal phosphate)lysine (lysine 37). Position 135 (arginine 135) interacts with substrate. Tyrosine 271 serves as the catalytic Proton acceptor; specific for L-alanine. Methionine 319 contacts substrate.

The protein belongs to the alanine racemase family. Pyridoxal 5'-phosphate is required as a cofactor.

The enzyme catalyses L-alanine = D-alanine. The protein operates within amino-acid biosynthesis; D-alanine biosynthesis; D-alanine from L-alanine: step 1/1. In terms of biological role, catalyzes the interconversion of L-alanine and D-alanine. May also act on other amino acids. The chain is Alanine racemase (alr) from Helicobacter pylori (strain J99 / ATCC 700824) (Campylobacter pylori J99).